The following is a 448-amino-acid chain: Probable D-serine dehydratase (448 aa).

Lys119 is modified (N6-(pyridoxal phosphate)lysine).

Belongs to the serine/threonine dehydratase family. DsdA subfamily. It depends on pyridoxal 5'-phosphate as a cofactor.

The enzyme catalyses D-serine = pyruvate + NH4(+). This is Probable D-serine dehydratase from Pseudomonas aeruginosa (strain UCBPP-PA14).